The primary structure comprises 362 residues: Aminomethyltransferase (362 aa).

The protein belongs to the GcvT family. As to quaternary structure, the glycine cleavage system is composed of four proteins: P, T, L and H.

It catalyses the reaction N(6)-[(R)-S(8)-aminomethyldihydrolipoyl]-L-lysyl-[protein] + (6S)-5,6,7,8-tetrahydrofolate = N(6)-[(R)-dihydrolipoyl]-L-lysyl-[protein] + (6R)-5,10-methylene-5,6,7,8-tetrahydrofolate + NH4(+). In terms of biological role, the glycine cleavage system catalyzes the degradation of glycine. In Pseudothermotoga lettingae (strain ATCC BAA-301 / DSM 14385 / NBRC 107922 / TMO) (Thermotoga lettingae), this protein is Aminomethyltransferase.